The chain runs to 205 residues: Urease accessory protein UreG (205 aa).

10-17 is a GTP binding site; sequence GPVGAGKT.

This sequence belongs to the SIMIBI class G3E GTPase family. UreG subfamily. As to quaternary structure, homodimer. UreD, UreF and UreG form a complex that acts as a GTP-hydrolysis-dependent molecular chaperone, activating the urease apoprotein by helping to assemble the nickel containing metallocenter of UreC. The UreE protein probably delivers the nickel.

The protein resides in the cytoplasm. In terms of biological role, facilitates the functional incorporation of the urease nickel metallocenter. This process requires GTP hydrolysis, probably effectuated by UreG. This chain is Urease accessory protein UreG, found in Corynebacterium glutamicum (strain ATCC 13032 / DSM 20300 / JCM 1318 / BCRC 11384 / CCUG 27702 / LMG 3730 / NBRC 12168 / NCIMB 10025 / NRRL B-2784 / 534).